A 386-amino-acid chain; its full sequence is 3-ketoacyl-CoA thiolase (386 aa).

Catalysis depends on Cys91, which acts as the Acyl-thioester intermediate. Residues His342 and Cys372 each act as proton acceptor in the active site.

Belongs to the thiolase-like superfamily. Thiolase family. Heterotetramer of two alpha chains (FadB) and two beta chains (FadA).

It is found in the cytoplasm. The enzyme catalyses an acyl-CoA + acetyl-CoA = a 3-oxoacyl-CoA + CoA. It participates in lipid metabolism; fatty acid beta-oxidation. Its function is as follows. Catalyzes the final step of fatty acid oxidation in which acetyl-CoA is released and the CoA ester of a fatty acid two carbons shorter is formed. The chain is 3-ketoacyl-CoA thiolase from Pseudoalteromonas atlantica (strain T6c / ATCC BAA-1087).